A 70-amino-acid chain; its full sequence is Deleted in esophageal cancer 1 (70 aa).

In terms of tissue distribution, expressed in many tissues, with highest expression in prostate and testis. Reduced expression in esophageal carcinomas.

In terms of biological role, candidate tumor suppressor. This Homo sapiens (Human) protein is Deleted in esophageal cancer 1.